The sequence spans 291 residues: Inositol-1-monophosphatase (291 aa).

Mg(2+)-binding residues include Glu83, Asp104, Ile106, and Asp107. Glu83 contributes to the substrate binding site. Substrate is bound by residues 106–109 (IDGT), Arg206, and Asp235. Asp235 is a binding site for Mg(2+).

The protein belongs to the inositol monophosphatase superfamily. Mg(2+) is required as a cofactor.

It catalyses the reaction a myo-inositol phosphate + H2O = myo-inositol + phosphate. This chain is Inositol-1-monophosphatase (suhB), found in Mycobacterium leprae (strain TN).